A 329-amino-acid polypeptide reads, in one-letter code: MKMNLEKLGERIIEGGDILVEEALELANLRGSALYPLFGAASRIKEHFVGDKVFLCSIVNAKSGRCPENCSFCAQSAHHKTDAPVYSLIDEERMVACAREAEKNGSSCYGIITSGTSIKKGEELERICNAVRRIRRETGITPSCSLGIINHETASALVEAGVETYHHNLETSRSFFPNVCTTHDYEEDVNTVRVAKKAGLKVCCGGIFGLGESVAQRIEMAYTLRELDVDSVPLNFLNPIAGTKLENAENITPMECLQTIALFRLILPTKRISICGGREKNLRDLQSWIFFAGASGTMIGNYLTTTGRAAEEDWQMLKDLNLSVASCCE.

One can recognise a Radical SAM core domain in the interval 48 to 278; that stretch reads FVGDKVFLCS…TKRISICGGR (231 aa). Cys66, Cys70, and Cys73 together coordinate [4Fe-4S] cluster. [2Fe-2S] cluster-binding residues include Ser143 and Cys203.

Belongs to the radical SAM superfamily. Biotin synthase family. As to quaternary structure, homodimer. The cofactor is [4Fe-4S] cluster. [2Fe-2S] cluster is required as a cofactor.

The catalysed reaction is (4R,5S)-dethiobiotin + (sulfur carrier)-SH + 2 reduced [2Fe-2S]-[ferredoxin] + 2 S-adenosyl-L-methionine = (sulfur carrier)-H + biotin + 2 5'-deoxyadenosine + 2 L-methionine + 2 oxidized [2Fe-2S]-[ferredoxin]. It participates in cofactor biosynthesis; biotin biosynthesis; biotin from 7,8-diaminononanoate: step 2/2. Catalyzes the conversion of dethiobiotin (DTB) to biotin by the insertion of a sulfur atom into dethiobiotin via a radical-based mechanism. The protein is Biotin synthase of Geotalea daltonii (strain DSM 22248 / JCM 15807 / FRC-32) (Geobacter daltonii).